Here is a 119-residue protein sequence, read N- to C-terminus: Large ribosomal subunit protein bL20 (119 aa).

It belongs to the bacterial ribosomal protein bL20 family.

Functionally, binds directly to 23S ribosomal RNA and is necessary for the in vitro assembly process of the 50S ribosomal subunit. It is not involved in the protein synthesizing functions of that subunit. This is Large ribosomal subunit protein bL20 from Bordetella bronchiseptica (strain ATCC BAA-588 / NCTC 13252 / RB50) (Alcaligenes bronchisepticus).